The primary structure comprises 482 residues: Zinc metalloproteinase/disintegrin (482 aa).

Positions 1–20 (MIQVLLVTICLAAFPYQGSS) are cleaved as a signal peptide. A propeptide spanning residues 21 to 189 (MILESGNVND…IKASQLVVTA (169 aa)) is cleaved from the precursor. In terms of domain architecture, Peptidase M12B spans 197 to 393 (RYIELVVVAD…HNPQCILNEP (197 aa)). Glutamate 200 and aspartate 284 together coordinate Ca(2+). 2 disulfide bridges follow: cysteine 308/cysteine 388 and cysteine 348/cysteine 372. A Zn(2+)-binding site is contributed by histidine 333. Residue glutamate 334 is part of the active site. Residues histidine 337 and histidine 343 each coordinate Zn(2+). Residues cysteine 388 and asparagine 391 each contribute to the Ca(2+) site. Residues 394 to 409 (LRTDTVSTPVSGNELL) constitute a propeptide that is removed on maturation. The Disintegrin domain occupies 401-482 (TPVSGNELLE…AGCPRNPFHA (82 aa)). 6 disulfide bridges follow: cysteine 415-cysteine 430, cysteine 417-cysteine 425, cysteine 424-cysteine 447, cysteine 438-cysteine 444, cysteine 443-cysteine 468, and cysteine 456-cysteine 475. The Cell attachment site motif lies at 460–462 (RGD).

It belongs to the venom metalloproteinase (M12B) family. P-II subfamily. P-IId sub-subfamily. As to quaternary structure, homodimer; disulfide-linked (disintegrin). Zn(2+) is required as a cofactor. As to expression, expressed by the venom gland.

It is found in the secreted. This recombinant protein hydrolyzes fibronectin, but has no effect on type I gelatin and type I to V collagens. Selectively hydrolyzes the Aalpha-chain of fibrinogen (FGA), but has no effect on fibrin. In terms of biological role, inhibits ADP-induced platelet aggregation. Its function is as follows. Recombinant metalloproteinase-disintegrin Mt-d-I (393-408): hydrolyzes type I gelatin, type III and V collagens, but has no effect on type I, II, IV collagens and fibronectin. Selectively hydrolyzes the Aalpha-chain of fibrinogen, but has no effect on fibrin. May induce hemorrhage in vascular tissue. Strongly inhibits ADP-induced platelet aggregation. When concentrated, Mt-d-I undergoes autoproteolytic processing into metalloproteinase and disintegrin. In Gloydius brevicauda (Korean slamosa snake), this protein is Zinc metalloproteinase/disintegrin.